A 373-amino-acid polypeptide reads, in one-letter code: Glutamate 5-kinase (373 aa).

Lys-12 provides a ligand contact to ATP. Substrate-binding residues include Ser-52, Asp-139, and Asn-154. 216–222 (TGGMVTK) serves as a coordination point for ATP. The PUA domain maps to 281-359 (RGSICVDDGA…QELNAVLGGN (79 aa)).

It belongs to the glutamate 5-kinase family.

It localises to the cytoplasm. The enzyme catalyses L-glutamate + ATP = L-glutamyl 5-phosphate + ADP. It functions in the pathway amino-acid biosynthesis; L-proline biosynthesis; L-glutamate 5-semialdehyde from L-glutamate: step 1/2. Functionally, catalyzes the transfer of a phosphate group to glutamate to form L-glutamate 5-phosphate. The chain is Glutamate 5-kinase from Dehalococcoides mccartyi (strain CBDB1).